The chain runs to 688 residues: Glycine--tRNA ligase beta subunit (688 aa).

Belongs to the class-II aminoacyl-tRNA synthetase family. Tetramer of two alpha and two beta subunits.

The protein localises to the cytoplasm. It catalyses the reaction tRNA(Gly) + glycine + ATP = glycyl-tRNA(Gly) + AMP + diphosphate. This chain is Glycine--tRNA ligase beta subunit, found in Aliivibrio fischeri (strain MJ11) (Vibrio fischeri).